The following is a 598-amino-acid chain: Transcriptional repressor tup12 (598 aa).

The segment at 118-177 (IASGVVPQSSKTKHGRNSVSFGKYGNAGPFNSDNSSKPLILNNGSSGGTPKNLRSPAIDS) is disordered. WD repeat units lie at residues 285–325 (EPPI…AMVF), 332–371 (LITL…QQIR), 374–413 (DIAQ…RTVC), 415–454 (WDVE…KVIR), 456–495 (WTSS…NTIK), 510–549 (YKEG…RTIQ), and 552–585 (SPDS…ATGS).

Belongs to the WD repeat TUP1 family.

Its function is as follows. Transcriptional repressor. This Schizosaccharomyces pombe (strain 972 / ATCC 24843) (Fission yeast) protein is Transcriptional repressor tup12 (tup12).